Consider the following 160-residue polypeptide: Small ribosomal subunit protein uS7B (160 aa).

The protein belongs to the universal ribosomal protein uS7 family. In terms of assembly, part of the 30S ribosomal subunit. Contacts proteins S9 and S11.

Functionally, one of the primary rRNA binding proteins, it binds directly to 16S rRNA where it nucleates assembly of the head domain of the 30S subunit. Is located at the subunit interface close to the decoding center, probably blocks exit of the E-site tRNA. This is Small ribosomal subunit protein uS7B from Aquifex aeolicus (strain VF5).